A 515-amino-acid chain; its full sequence is MTKRALISVSDKSGIIDFAKELKNLGWDIISTGGTKVALDNAGVETIAIDDVTGFPEMMDGRVKTLHPNIHGGLLARRDVDSHLQAAKDNNIELIDLVVINLYPFKETILRPDVTYDLAVENIDIGGPSMLRSAAKNHASVTVVVDPADYATVLGELADAGQTTFETRQRLAAKVFRHTAAYDALIAEYFTAQVGEAKPEKLTITYDLKQAMRYGENPQQDADFYQKALPTDYSIASAKQLNGKELSFNNIRDADAAIRIIRDFKDRPTVIALKHMNPCGIGQADDIETAWDYAYEADPVSIFGGIVVLNREVDAATAKKMHPIFLEIIIAPSYSEEALAILTNKKKNLRILELPFDAQAASEVEAEYTGVVGGLLVQNQDVVAENPSDWQVVTDRQPTEQEATALEFAWKAIKYVKSNGIIITNDHMTLGLGAGQTNRVGSVKIAIEQAKDHLDGAVLASDAFFPFADNIEEVAAAGVKAIIQPGGSVRDQDSIDAANKHGLTMIFTGVRHFRH.

The 145-residue stretch at 1-145 (MTKRALISVS…KNHASVTVVV (145 aa)) folds into the MGS-like domain.

It belongs to the PurH family.

It catalyses the reaction (6R)-10-formyltetrahydrofolate + 5-amino-1-(5-phospho-beta-D-ribosyl)imidazole-4-carboxamide = 5-formamido-1-(5-phospho-D-ribosyl)imidazole-4-carboxamide + (6S)-5,6,7,8-tetrahydrofolate. The enzyme catalyses IMP + H2O = 5-formamido-1-(5-phospho-D-ribosyl)imidazole-4-carboxamide. It functions in the pathway purine metabolism; IMP biosynthesis via de novo pathway; 5-formamido-1-(5-phospho-D-ribosyl)imidazole-4-carboxamide from 5-amino-1-(5-phospho-D-ribosyl)imidazole-4-carboxamide (10-formyl THF route): step 1/1. The protein operates within purine metabolism; IMP biosynthesis via de novo pathway; IMP from 5-formamido-1-(5-phospho-D-ribosyl)imidazole-4-carboxamide: step 1/1. The sequence is that of Bifunctional purine biosynthesis protein PurH from Streptococcus pyogenes serotype M18 (strain MGAS8232).